The chain runs to 301 residues: tRNA (guanine-N(7)-)-methyltransferase (301 aa).

Residues 1-26 form a disordered region; it reads MSETPDSPRPVTPGSQASFGTYGGRP. Positions 85, 110, 137, and 160 each coordinate S-adenosyl-L-methionine. The active site involves D160. Positions 164 and 196 each coordinate substrate. The interval 244-270 is disordered; sequence APVREGRAPVSTEHTGPNEGVDEEGGW. A substrate-binding site is contributed by 280–283; the sequence is TSFE.

It belongs to the class I-like SAM-binding methyltransferase superfamily. TrmB family.

The enzyme catalyses guanosine(46) in tRNA + S-adenosyl-L-methionine = N(7)-methylguanosine(46) in tRNA + S-adenosyl-L-homocysteine. The protein operates within tRNA modification; N(7)-methylguanine-tRNA biosynthesis. Its function is as follows. Catalyzes the formation of N(7)-methylguanine at position 46 (m7G46) in tRNA. The chain is tRNA (guanine-N(7)-)-methyltransferase from Paenarthrobacter aurescens (strain TC1).